The chain runs to 181 residues: Shikimate kinase (181 aa).

17-22 contributes to the ATP binding site; it reads GAGKTT. T21 contacts Mg(2+). Substrate-binding residues include D39, R63, and G85. R122 lines the ATP pocket. R141 is a substrate binding site.

The protein belongs to the shikimate kinase family. As to quaternary structure, monomer. The cofactor is Mg(2+).

It is found in the cytoplasm. The enzyme catalyses shikimate + ATP = 3-phosphoshikimate + ADP + H(+). The protein operates within metabolic intermediate biosynthesis; chorismate biosynthesis; chorismate from D-erythrose 4-phosphate and phosphoenolpyruvate: step 5/7. Functionally, catalyzes the specific phosphorylation of the 3-hydroxyl group of shikimic acid using ATP as a cosubstrate. The protein is Shikimate kinase of Trichormus variabilis (strain ATCC 29413 / PCC 7937) (Anabaena variabilis).